The following is a 549-amino-acid chain: Probable protein kinase UbiB (549 aa).

The Protein kinase domain occupies 123 to 501 (DFDDVPLASA…QHKAHKSNYL (379 aa)). Residues 129-137 (LASASIAQV) and K152 each bind ATP. D287 serves as the catalytic Proton acceptor. 2 helical membrane passes run 498 to 517 (SNYL…ILFT) and 521 to 540 (TLWA…LLGW).

Belongs to the ABC1 family. UbiB subfamily.

Its subcellular location is the cell inner membrane. It participates in cofactor biosynthesis; ubiquinone biosynthesis [regulation]. Its function is as follows. Is probably a protein kinase regulator of UbiI activity which is involved in aerobic coenzyme Q (ubiquinone) biosynthesis. The polypeptide is Probable protein kinase UbiB (Shewanella denitrificans (strain OS217 / ATCC BAA-1090 / DSM 15013)).